The chain runs to 526 residues: Beta,beta-carotene 15,15'-dioxygenase (526 aa).

4 residues coordinate Fe cation: His-172, His-236, His-307, and His-512.

The protein belongs to the carotenoid oxygenase family. Fe(2+) serves as cofactor.

The protein localises to the cytoplasm. It localises to the cytosol. It catalyses the reaction all-trans-beta-carotene + O2 = 2 all-trans-retinal. It participates in cofactor metabolism; retinol metabolism. In terms of biological role, symmetrically cleaves beta-carotene into two molecules of retinal using a dioxygenase mechanism. The polypeptide is Beta,beta-carotene 15,15'-dioxygenase (Gallus gallus (Chicken)).